A 208-amino-acid polypeptide reads, in one-letter code: Ribosomal RNA large subunit methyltransferase E (208 aa).

S-adenosyl-L-methionine is bound by residues glycine 61, tryptophan 63, aspartate 81, aspartate 97, and aspartate 122. Lysine 162 (proton acceptor) is an active-site residue.

This sequence belongs to the class I-like SAM-binding methyltransferase superfamily. RNA methyltransferase RlmE family.

It is found in the cytoplasm. The catalysed reaction is uridine(2552) in 23S rRNA + S-adenosyl-L-methionine = 2'-O-methyluridine(2552) in 23S rRNA + S-adenosyl-L-homocysteine + H(+). Functionally, specifically methylates the uridine in position 2552 of 23S rRNA at the 2'-O position of the ribose in the fully assembled 50S ribosomal subunit. The sequence is that of Ribosomal RNA large subunit methyltransferase E from Pseudomonas putida (strain GB-1).